Reading from the N-terminus, the 156-residue chain is Cyanate hydratase (156 aa).

Catalysis depends on residues arginine 96, glutamate 99, and serine 122.

It belongs to the cyanase family.

It catalyses the reaction cyanate + hydrogencarbonate + 3 H(+) = NH4(+) + 2 CO2. Its function is as follows. Catalyzes the reaction of cyanate with bicarbonate to produce ammonia and carbon dioxide. This is Cyanate hydratase from Escherichia coli (strain K12 / DH10B).